We begin with the raw amino-acid sequence, 783 residues long: MPSQFNDNFVATDDDVGTMARVGMALDRELNGDSFQDNLNFQPRSGKREDFEPFFQDTPNTKSLSKHFHDFTMNASLETLPSVEKPRGRNMNAFEETSWNRFRKNGSLFPLSSPPISEPDLRPQALNETPDYRNRFLGAFKKQGVLDDHGNLKLDASPSFLKKPAEYTPLANRQNQNLAFDSPTEALPPKPTTPWRRNGFRSKTTPNLNSGKETPSSYKASARLMEQLGLNHSEPSVDFNNQTSYRLPNLTNLSSLIRDDTIDENGNAKEHDRLPELNTIPVASTDEQLFNAHQLLEKKFEILKRERNECNAKIDELQDKLELLTDAYNREKRRARSLEERMSKEMLTKLGESNVDDGMAASRYDTVKREKERLSEHLKSLQEQYEHIQSVYKNVLLDRESYIMRLGNKISENNELLNENRVLKEKLQTYLDKKESNVTSKIKSTAENSSKPLSMNEADERKDGLNNLLFENKSGANTKEMSNGTETAKENCSPQQDSTSPTSGYQDLVKELAKEIEMRKSLELKLKLSQSNKAGPVKHRKRRPKSKRRITGKVVFDSPNVASGVESDEGSEEISLDSEYSDILSDDGDFEKEKQATLPRRRSSSSMKGNKLAEDSYLNEAGFDWNQGTFHNGSEFGTTGVPDEPNEEELPKHVLKQVEHIINESAAHGVGKCNACHARQEDLIRGEQKVSHSNCLYADQTLRPSQPPSEALKTVVNQLTNELMELKKRYEKLSDRYNSLTPGYHKHKRQEIKNKLIKLIECMESKSDQIYLLYDVNVGKDFS.

Serine 157 bears the Phosphoserine mark. Disordered regions lie at residues 180–216, 434–458, 471–504, and 528–610; these read FDSP…ETPS, KESN…MNEA, ENKS…PTSG, and LSQS…MKGN. Composition is skewed to polar residues over residues 201-216, 437-453, and 474-504; these read RSKT…ETPS, NVTS…SKPL, and SGAN…PTSG. A compositionally biased stretch (basic residues) spans 536-551; the sequence is PVKHRKRRPKSKRRIT. Positions 566–590 are enriched in acidic residues; sequence ESDEGSEEISLDSEYSDILSDDGDF.

The protein localises to the cytoplasm. It is found in the cytoskeleton. It localises to the microtubule organizing center. The protein resides in the spindle pole body. Functionally, has a role in meiosis. This Schizosaccharomyces pombe (strain 972 / ATCC 24843) (Fission yeast) protein is Spindle pole body protein ppc89 (ppc89).